Reading from the N-terminus, the 35-residue chain is Potassium channel toxin alpha-KTx 23.2 (35 aa).

3 cysteine pairs are disulfide-bonded: C6–C26, C12–C31, and C16–C33.

This sequence belongs to the short scorpion toxin superfamily. Potassium channel inhibitor family. Alpha-KTx 23 subfamily. As to expression, expressed by the venom gland.

Its subcellular location is the secreted. In terms of biological role, selectively and irreversibly binds (K(d)=2.9 pM) and blocks Kv1.3/KCNA3 potassium channels of human T-lymphocytes. Weakly blocks Kv1.2/KCNA2 (9%). The sequence is that of Potassium channel toxin alpha-KTx 23.2 from Vaejovis mexicanus smithi (Mexican scorpion).